We begin with the raw amino-acid sequence, 394 residues long: Argininosuccinate synthase (394 aa).

ATP-binding positions include 7–15 (AYSGGLDTS) and Ala35. Tyr85 contacts L-citrulline. ATP is bound at residue Gly115. Positions 117, 121, and 122 each coordinate L-aspartate. Position 121 (Asn121) interacts with L-citrulline. 5 residues coordinate L-citrulline: Arg125, Ser174, Ser183, Glu258, and Tyr270.

It belongs to the argininosuccinate synthase family. Type 1 subfamily. Homotetramer.

The protein resides in the cytoplasm. The enzyme catalyses L-citrulline + L-aspartate + ATP = 2-(N(omega)-L-arginino)succinate + AMP + diphosphate + H(+). It functions in the pathway amino-acid biosynthesis; L-arginine biosynthesis; L-arginine from L-ornithine and carbamoyl phosphate: step 2/3. The sequence is that of Argininosuccinate synthase from Methanopyrus kandleri (strain AV19 / DSM 6324 / JCM 9639 / NBRC 100938).